A 211-amino-acid polypeptide reads, in one-letter code: Protein-L-isoaspartate O-methyltransferase 2 (211 aa).

Serine 61 is an active-site residue.

Belongs to the methyltransferase superfamily. L-isoaspartyl/D-aspartyl protein methyltransferase family.

The protein resides in the cytoplasm. The catalysed reaction is [protein]-L-isoaspartate + S-adenosyl-L-methionine = [protein]-L-isoaspartate alpha-methyl ester + S-adenosyl-L-homocysteine. Functionally, catalyzes the methyl esterification of L-isoaspartyl residues in peptides and proteins that result from spontaneous decomposition of normal L-aspartyl and L-asparaginyl residues. It plays a role in the repair and/or degradation of damaged proteins. The polypeptide is Protein-L-isoaspartate O-methyltransferase 2 (Polaromonas sp. (strain JS666 / ATCC BAA-500)).